The chain runs to 274 residues: DegV domain-containing protein Cgl2349/cg2579 (274 aa).

Residues 3–259 form the DegV domain; the sequence is VRVIVDSSAC…PGAVSVSAVF (257 aa). Thr-39 and Ser-73 together coordinate hexadecanoate.

Monomer.

Its function is as follows. Binds long-chain fatty acids, such as palmitate, and may play a role in lipid transport or fatty acid metabolism. The polypeptide is DegV domain-containing protein Cgl2349/cg2579 (Corynebacterium glutamicum (strain ATCC 13032 / DSM 20300 / JCM 1318 / BCRC 11384 / CCUG 27702 / LMG 3730 / NBRC 12168 / NCIMB 10025 / NRRL B-2784 / 534)).